We begin with the raw amino-acid sequence, 238 residues long: Probable septum site-determining protein MinC (238 aa).

It belongs to the MinC family. In terms of assembly, interacts with MinD and FtsZ.

In terms of biological role, cell division inhibitor that blocks the formation of polar Z ring septums. Rapidly oscillates between the poles of the cell to destabilize FtsZ filaments that have formed before they mature into polar Z rings. Prevents FtsZ polymerization. The sequence is that of Probable septum site-determining protein MinC from Aeromonas salmonicida (strain A449).